The primary structure comprises 260 residues: Manganese transport system ATP-binding protein MntA (260 aa).

Positions I10–P245 constitute an ABC transporter domain. G43–S50 is a binding site for ATP.

Belongs to the ABC transporter superfamily.

Part of an ATP-driven transport system for manganese. The polypeptide is Manganese transport system ATP-binding protein MntA (mntA) (Synechocystis sp. (strain ATCC 27184 / PCC 6803 / Kazusa)).